The sequence spans 239 residues: Orotidine 5'-phosphate decarboxylase (239 aa).

Residues Asp-15, Lys-36, 63–72 (DLKFHDIPNT), Thr-127, Arg-189, Gln-198, Gly-218, and Arg-219 each bind substrate. The active-site Proton donor is the Lys-65.

This sequence belongs to the OMP decarboxylase family. Type 1 subfamily. Homodimer.

It catalyses the reaction orotidine 5'-phosphate + H(+) = UMP + CO2. It functions in the pathway pyrimidine metabolism; UMP biosynthesis via de novo pathway; UMP from orotate: step 2/2. Functionally, catalyzes the decarboxylation of orotidine 5'-monophosphate (OMP) to uridine 5'-monophosphate (UMP). The polypeptide is Orotidine 5'-phosphate decarboxylase (Prochlorococcus marinus (strain MIT 9515)).